Reading from the N-terminus, the 315-residue chain is Ester hydrolase C11orf54 homolog (315 aa).

Residues His-266, His-268, and His-278 each coordinate Zn(2+).

In terms of assembly, monomer. Zn(2+) serves as cofactor.

Its subcellular location is the nucleus. It localises to the cytoplasm. Exhibits ester hydrolase activity on the substrate p-nitrophenyl acetate, in vitro. Regulates DNA damage and repair by regulating HIF1A degradation via chaperone-mediated autophagy (CMA). The chain is Ester hydrolase C11orf54 homolog from Mus musculus (Mouse).